We begin with the raw amino-acid sequence, 96 residues long: MSAVVQQQGDLLLNVYIQPKASRDQIVGLHGDELKVAITAPPIDGKANAHLSKYLAKAFKVPKSDVYIIKGELGRHKQIRIVTPKLIPPEVSELLE.

This sequence belongs to the UPF0235 family.

The polypeptide is UPF0235 protein Sputcn32_2690 (Shewanella putrefaciens (strain CN-32 / ATCC BAA-453)).